The sequence spans 640 residues: Chaperone protein DnaK (640 aa).

T198 is subject to Phosphothreonine; by autocatalysis. The disordered stretch occupies residues 600-640; the sequence is KTQGAGAEGGEQPHGEQEAGGAAKGEKVVDADFEEVKDDKK. A compositionally biased stretch (acidic residues) spans 630-640; that stretch reads ADFEEVKDDKK.

This sequence belongs to the heat shock protein 70 family.

In terms of biological role, acts as a chaperone. In Citrifermentans bemidjiense (strain ATCC BAA-1014 / DSM 16622 / JCM 12645 / Bem) (Geobacter bemidjiensis), this protein is Chaperone protein DnaK.